We begin with the raw amino-acid sequence, 297 residues long: D-aminoacyl-tRNA deacylase (297 aa).

This sequence belongs to the DtdA deacylase family. Monomer. It depends on Zn(2+) as a cofactor.

The enzyme catalyses a D-aminoacyl-tRNA + H2O = a tRNA + a D-alpha-amino acid + H(+). It catalyses the reaction glycyl-tRNA(Ala) + H2O = tRNA(Ala) + glycine + H(+). Functionally, D-aminoacyl-tRNA deacylase with broad substrate specificity. By recycling D-aminoacyl-tRNA to D-amino acids and free tRNA molecules, this enzyme counteracts the toxicity associated with the formation of D-aminoacyl-tRNA entities in vivo. The polypeptide is D-aminoacyl-tRNA deacylase (Methanosarcina acetivorans (strain ATCC 35395 / DSM 2834 / JCM 12185 / C2A)).